The following is an 816-amino-acid chain: Leucine--tRNA ligase (816 aa).

Residues 40–51 (SYPSGSQLHAGH) carry the 'HIGH' region motif. The short motif at 576–580 (KMSKS) is the 'KMSKS' region element. Lysine 579 provides a ligand contact to ATP.

This sequence belongs to the class-I aminoacyl-tRNA synthetase family.

The protein resides in the cytoplasm. It catalyses the reaction tRNA(Leu) + L-leucine + ATP = L-leucyl-tRNA(Leu) + AMP + diphosphate. The polypeptide is Leucine--tRNA ligase (Clostridium perfringens (strain 13 / Type A)).